Reading from the N-terminus, the 380-residue chain is L-prolyl-[peptidyl-carrier protein] dehydrogenase (380 aa).

Glutamate 243 functions as the Proton acceptor in the catalytic mechanism. Arginine 269 and glutamine 280 together coordinate FAD.

This sequence belongs to the acyl-CoA dehydrogenase family. FAD is required as a cofactor.

It catalyses the reaction L-prolyl-[peptidyl-carrier protein] + 2 oxidized [electron-transfer flavoprotein] + H(+) = (1H-pyrrole-2-carbonyl)-[peptidyl-carrier protein] + 2 reduced [electron-transfer flavoprotein]. Functionally, involved in the biosynthesis of pyoluteorin. Catalyzes the desaturation of the L-prolyl-[PltL] to yield 1H-pyrrole-2-carbonyl-[PltL]. The polypeptide is L-prolyl-[peptidyl-carrier protein] dehydrogenase (Pseudomonas fluorescens (strain ATCC BAA-477 / NRRL B-23932 / Pf-5)).